The sequence spans 413 residues: Serine hydroxymethyltransferase (413 aa).

(6S)-5,6,7,8-tetrahydrofolate contacts are provided by residues leucine 117 and 121–123 (GHL). Lysine 226 is subject to N6-(pyridoxal phosphate)lysine. Residues glutamate 239 and 349 to 351 (SPF) contribute to the (6S)-5,6,7,8-tetrahydrofolate site.

Belongs to the SHMT family. Homodimer. The cofactor is pyridoxal 5'-phosphate.

It is found in the cytoplasm. It catalyses the reaction (6R)-5,10-methylene-5,6,7,8-tetrahydrofolate + glycine + H2O = (6S)-5,6,7,8-tetrahydrofolate + L-serine. It functions in the pathway one-carbon metabolism; tetrahydrofolate interconversion. Its pathway is amino-acid biosynthesis; glycine biosynthesis; glycine from L-serine: step 1/1. Functionally, catalyzes the reversible interconversion of serine and glycine with tetrahydrofolate (THF) serving as the one-carbon carrier. This reaction serves as the major source of one-carbon groups required for the biosynthesis of purines, thymidylate, methionine, and other important biomolecules. Also exhibits THF-independent aldolase activity toward beta-hydroxyamino acids, producing glycine and aldehydes, via a retro-aldol mechanism. This is Serine hydroxymethyltransferase from Bacillus cereus (strain G9842).